The following is a 453-amino-acid chain: Argininosuccinate lyase (453 aa).

Belongs to the lyase 1 family. Argininosuccinate lyase subfamily.

It localises to the cytoplasm. The catalysed reaction is 2-(N(omega)-L-arginino)succinate = fumarate + L-arginine. It participates in amino-acid biosynthesis; L-arginine biosynthesis; L-arginine from L-ornithine and carbamoyl phosphate: step 3/3. In Shewanella loihica (strain ATCC BAA-1088 / PV-4), this protein is Argininosuccinate lyase.